Consider the following 205-residue polypeptide: Pyridoxal 5'-phosphate synthase subunit PdxT (205 aa).

52–54 (GES) is a binding site for L-glutamine. The active-site Nucleophile is Cys-84. L-glutamine-binding positions include Arg-116 and 145–146 (IR). Residues His-185 and Glu-187 each act as charge relay system in the active site.

It belongs to the glutaminase PdxT/SNO family. As to quaternary structure, in the presence of PdxS, forms a dodecamer of heterodimers. Only shows activity in the heterodimer.

It carries out the reaction aldehydo-D-ribose 5-phosphate + D-glyceraldehyde 3-phosphate + L-glutamine = pyridoxal 5'-phosphate + L-glutamate + phosphate + 3 H2O + H(+). It catalyses the reaction L-glutamine + H2O = L-glutamate + NH4(+). Its pathway is cofactor biosynthesis; pyridoxal 5'-phosphate biosynthesis. In terms of biological role, catalyzes the hydrolysis of glutamine to glutamate and ammonia as part of the biosynthesis of pyridoxal 5'-phosphate. The resulting ammonia molecule is channeled to the active site of PdxS. The polypeptide is Pyridoxal 5'-phosphate synthase subunit PdxT (Staphylothermus marinus (strain ATCC 43588 / DSM 3639 / JCM 9404 / F1)).